We begin with the raw amino-acid sequence, 338 residues long: Aspartate-semialdehyde dehydrogenase (338 aa).

Residues Thr-13–Val-16 and Asn-41–Ser-42 each bind NADP(+). Arg-101 lines the phosphate pocket. Cys-132 acts as the Acyl-thioester intermediate in catalysis. Gln-159 serves as a coordination point for substrate. Residue Ser-162 to Gly-163 participates in NADP(+) binding. Phosphate is bound at residue Lys-216. Arg-237 is a binding site for substrate. Catalysis depends on His-244, which acts as the Proton acceptor. Residue Asn-317 participates in NADP(+) binding.

This sequence belongs to the aspartate-semialdehyde dehydrogenase family. As to quaternary structure, homodimer.

It carries out the reaction L-aspartate 4-semialdehyde + phosphate + NADP(+) = 4-phospho-L-aspartate + NADPH + H(+). The protein operates within amino-acid biosynthesis; L-lysine biosynthesis via DAP pathway; (S)-tetrahydrodipicolinate from L-aspartate: step 2/4. It participates in amino-acid biosynthesis; L-methionine biosynthesis via de novo pathway; L-homoserine from L-aspartate: step 2/3. It functions in the pathway amino-acid biosynthesis; L-threonine biosynthesis; L-threonine from L-aspartate: step 2/5. Functionally, catalyzes the NADPH-dependent formation of L-aspartate-semialdehyde (L-ASA) by the reductive dephosphorylation of L-aspartyl-4-phosphate. In Rickettsia bellii (strain RML369-C), this protein is Aspartate-semialdehyde dehydrogenase.